The primary structure comprises 142 residues: Transcriptional regulator MraZ (142 aa).

2 consecutive SpoVT-AbrB domains span residues 5–47 (THTP…PAPE) and 76–119 (AHDE…DRVA).

Belongs to the MraZ family. As to quaternary structure, forms oligomers.

The protein resides in the cytoplasm. The protein localises to the nucleoid. This chain is Transcriptional regulator MraZ, found in Salinispora arenicola (strain CNS-205).